The chain runs to 144 residues: Large ribosomal subunit protein uL15 (144 aa).

The interval 1 to 54 (MRLNTLSPAEGSKKAGKRLGRGIGSGLGKTGGRGHKGQNSRSGGGVRRGFEGGQ) is disordered. The segment covering 21-31 (RGIGSGLGKTG) has biased composition (gly residues).

Belongs to the universal ribosomal protein uL15 family. Part of the 50S ribosomal subunit.

In terms of biological role, binds to the 23S rRNA. The sequence is that of Large ribosomal subunit protein uL15 from Enterobacter sp. (strain 638).